We begin with the raw amino-acid sequence, 409 residues long: 2,3-bisphosphoglycerate-independent phosphoglycerate mutase 1 (409 aa).

Over residues 163–173 (SDADPKVEGKP) the composition is skewed to basic and acidic residues. Positions 163-184 (SDADPKVEGKPPKKIKALDGSP) are disordered.

This sequence belongs to the BPG-independent phosphoglycerate mutase family. A-PGAM subfamily.

The catalysed reaction is (2R)-2-phosphoglycerate = (2R)-3-phosphoglycerate. It functions in the pathway carbohydrate degradation; glycolysis; pyruvate from D-glyceraldehyde 3-phosphate: step 3/5. Catalyzes the interconversion of 2-phosphoglycerate and 3-phosphoglycerate. The sequence is that of 2,3-bisphosphoglycerate-independent phosphoglycerate mutase 1 (apgM1) from Methanothermobacter thermautotrophicus (strain ATCC 29096 / DSM 1053 / JCM 10044 / NBRC 100330 / Delta H) (Methanobacterium thermoautotrophicum).